A 266-amino-acid chain; its full sequence is Glucosamine-6-phosphate deaminase (266 aa).

Catalysis depends on aspartate 72, which acts as the Proton acceptor; for enolization step. The For ring-opening step role is filled by aspartate 141. Histidine 143 (proton acceptor; for ring-opening step) is an active-site residue. The active-site For ring-opening step is the glutamate 148.

This sequence belongs to the glucosamine/galactosamine-6-phosphate isomerase family. NagB subfamily. In terms of assembly, homohexamer; trimer of disulfide-linked dimers.

The enzyme catalyses alpha-D-glucosamine 6-phosphate + H2O = beta-D-fructose 6-phosphate + NH4(+). The protein operates within amino-sugar metabolism; N-acetylneuraminate degradation; D-fructose 6-phosphate from N-acetylneuraminate: step 5/5. With respect to regulation, allosterically activated by N-acetylglucosamine 6-phosphate (GlcNAc6P). Functionally, catalyzes the reversible isomerization-deamination of glucosamine 6-phosphate (GlcN6P) to form fructose 6-phosphate (Fru6P) and ammonium ion. In Vibrio parahaemolyticus serotype O3:K6 (strain RIMD 2210633), this protein is Glucosamine-6-phosphate deaminase.